The primary structure comprises 223 residues: uncharacterized protein (223 aa).

It to M.jannaschii MJ1453.

This is an uncharacterized protein from Methanothermobacter thermautotrophicus (strain ATCC 29096 / DSM 1053 / JCM 10044 / NBRC 100330 / Delta H) (Methanobacterium thermoautotrophicum).